We begin with the raw amino-acid sequence, 314 residues long: 2-oxo-3-(phosphooxy)propyl 3-oxoalkanoate synthase (314 aa).

This sequence belongs to the AfsA family.

It carries out the reaction a medium-chain 3-oxoacyl-[ACP] + dihydroxyacetone phosphate = a (4-alkanoyl-5-oxo-2,5-dihydrofuran-3-yl)methyl phosphate + holo-[ACP] + H2O. Its function is as follows. Involved of the biosynthesis of S.coelicolor butanolide 1 (SCB1), a gamma-butyrolactone that triggers antibiotic production. The chain is 2-oxo-3-(phosphooxy)propyl 3-oxoalkanoate synthase from Streptomyces coelicolor (strain ATCC BAA-471 / A3(2) / M145).